We begin with the raw amino-acid sequence, 357 residues long: Phospho-N-acetylmuramoyl-pentapeptide-transferase (357 aa).

The next 10 helical transmembrane spans lie at 23-43, 70-90, 91-111, 127-147, 171-191, 196-216, 236-256, 260-280, 286-306, and 334-354; these read AIFS…YFIY, TMGG…YCNL, SNIY…IGFI, LKWK…MIKI, YLYI…VNLT, GLAI…SLFS, LAIL…FNSY, VFMG…IAIL, LLII…LQII, and LIIV…LISL.

It belongs to the glycosyltransferase 4 family. MraY subfamily. The cofactor is Mg(2+).

The protein resides in the cell inner membrane. The enzyme catalyses UDP-N-acetyl-alpha-D-muramoyl-L-alanyl-gamma-D-glutamyl-meso-2,6-diaminopimeloyl-D-alanyl-D-alanine + di-trans,octa-cis-undecaprenyl phosphate = di-trans,octa-cis-undecaprenyl diphospho-N-acetyl-alpha-D-muramoyl-L-alanyl-D-glutamyl-meso-2,6-diaminopimeloyl-D-alanyl-D-alanine + UMP. The protein operates within cell wall biogenesis; peptidoglycan biosynthesis. Catalyzes the initial step of the lipid cycle reactions in the biosynthesis of the cell wall peptidoglycan: transfers peptidoglycan precursor phospho-MurNAc-pentapeptide from UDP-MurNAc-pentapeptide onto the lipid carrier undecaprenyl phosphate, yielding undecaprenyl-pyrophosphoryl-MurNAc-pentapeptide, known as lipid I. This is Phospho-N-acetylmuramoyl-pentapeptide-transferase from Buchnera aphidicola subsp. Acyrthosiphon pisum (strain APS) (Acyrthosiphon pisum symbiotic bacterium).